The primary structure comprises 267 residues: Tryptophan synthase alpha chain (267 aa).

Residues E49 and D60 each act as proton acceptor in the active site.

It belongs to the TrpA family. As to quaternary structure, tetramer of two alpha and two beta chains.

It catalyses the reaction (1S,2R)-1-C-(indol-3-yl)glycerol 3-phosphate + L-serine = D-glyceraldehyde 3-phosphate + L-tryptophan + H2O. Its pathway is amino-acid biosynthesis; L-tryptophan biosynthesis; L-tryptophan from chorismate: step 5/5. Its function is as follows. The alpha subunit is responsible for the aldol cleavage of indoleglycerol phosphate to indole and glyceraldehyde 3-phosphate. The protein is Tryptophan synthase alpha chain of Acinetobacter baumannii (strain AB307-0294).